Here is a 131-residue protein sequence, read N- to C-terminus: Small ribosomal subunit protein uS8 (131 aa).

It belongs to the universal ribosomal protein uS8 family. Part of the 30S ribosomal subunit. Contacts proteins S5 and S12.

Functionally, one of the primary rRNA binding proteins, it binds directly to 16S rRNA central domain where it helps coordinate assembly of the platform of the 30S subunit. This chain is Small ribosomal subunit protein uS8, found in Campylobacter fetus subsp. fetus (strain 82-40).